Consider the following 101-residue polypeptide: MNSIVNFSQQLIQNFQEVSQKTAADSSNLKAFAYLGAGLAMIGVIGVGAGQGYAAGKACDAIARNPEAQKQVFRVLVIGTAISETSSIYALLVALILIFVG.

Helical transmembrane passes span 31–51 (AFAY…GAGQ) and 81–101 (AISE…IFVG).

This sequence belongs to the ATPase C chain family. F-type ATPases have 2 components, F(1) - the catalytic core - and F(0) - the membrane proton channel. F(1) has five subunits: alpha(3), beta(3), gamma(1), delta(1), epsilon(1). F(0) has three main subunits: a(1), b(2) and c(10-14). The alpha and beta chains form an alternating ring which encloses part of the gamma chain. F(1) is attached to F(0) by a central stalk formed by the gamma and epsilon chains, while a peripheral stalk is formed by the delta and b chains.

The protein resides in the cell membrane. Its function is as follows. F(1)F(0) ATP synthase produces ATP from ADP in the presence of a proton or sodium gradient. F-type ATPases consist of two structural domains, F(1) containing the extramembraneous catalytic core and F(0) containing the membrane proton channel, linked together by a central stalk and a peripheral stalk. During catalysis, ATP synthesis in the catalytic domain of F(1) is coupled via a rotary mechanism of the central stalk subunits to proton translocation. In terms of biological role, key component of the F(0) channel; it plays a direct role in translocation across the membrane. A homomeric c-ring of between 10-14 subunits forms the central stalk rotor element with the F(1) delta and epsilon subunits. This is ATP synthase subunit c from Mesomycoplasma hyopneumoniae (strain 232) (Mycoplasma hyopneumoniae).